Reading from the N-terminus, the 333-residue chain is Cell division protein FtsQ (333 aa).

A disordered region spans residues 1–99 (MTGTGPHGDP…ARREAKRRAV (99 aa)). The Cytoplasmic segment spans residues 1 to 118 (MTGTGPHGDP…VPRNTIRGLK (118 aa)). The segment covering 11–22 (AEDPAGPDDTAA) has biased composition (acidic residues). Residues 44–57 (TTETTAQTGTTAEA) are compositionally biased toward low complexity. Residues 73-92 (ERAERRAARDRAMAIEQARR) show a composition bias toward basic and acidic residues. Residues 119–139 (VLMWAALVSVLAVALGLLLYF) traverse the membrane as a helical segment. Topologically, residues 140-333 (TPIMSARNVE…VSSPDLPTVK (194 aa)) are extracellular. The POTRA domain maps to 143–211 (MSARNVEVSG…STLKISIVER (69 aa)).

The protein belongs to the FtsQ/DivIB family. FtsQ subfamily.

Its subcellular location is the cell membrane. Functionally, essential cell division protein. This chain is Cell division protein FtsQ, found in Mycolicibacterium smegmatis (strain ATCC 700084 / mc(2)155) (Mycobacterium smegmatis).